The sequence spans 138 residues: MAEKLKVELVTPYKRVLSEEVDEITATGALGEFGVLPGHAPFLTSLKIGELAYKKDGVQQHMALNWGYFEVEGDKVTVLVETAERADEIDLERAKAALGRAEEALKKLSPEDKSFRIYEAALERAAIRMQVAAKAARK.

It belongs to the ATPase epsilon chain family. As to quaternary structure, F-type ATPases have 2 components, CF(1) - the catalytic core - and CF(0) - the membrane proton channel. CF(1) has five subunits: alpha(3), beta(3), gamma(1), delta(1), epsilon(1). CF(0) has three main subunits: a, b and c.

The protein resides in the cell inner membrane. Its function is as follows. Produces ATP from ADP in the presence of a proton gradient across the membrane. In Geotalea uraniireducens (strain Rf4) (Geobacter uraniireducens), this protein is ATP synthase epsilon chain.